Consider the following 370-residue polypeptide: D-alanine--D-alanine ligase (370 aa).

The 209-residue stretch at 144-352 folds into the ATP-grasp domain; that stretch reads KKIFADAGIP…YGALIERLVD (209 aa). An ATP-binding site is contributed by 177-232; that stretch reads EEVLTYPVFVKPANLGSSVGISKATNKTELIEAMTEAFLYDRRVVVEQGVVAREIE. Residues Asp306, Glu319, and Asn321 each coordinate Mg(2+).

Belongs to the D-alanine--D-alanine ligase family. Mg(2+) serves as cofactor. Mn(2+) is required as a cofactor.

It localises to the cytoplasm. The catalysed reaction is 2 D-alanine + ATP = D-alanyl-D-alanine + ADP + phosphate + H(+). The protein operates within cell wall biogenesis; peptidoglycan biosynthesis. Cell wall formation. The protein is D-alanine--D-alanine ligase of Listeria innocua serovar 6a (strain ATCC BAA-680 / CLIP 11262).